The chain runs to 155 residues: Small ribosomal subunit protein uS7c (155 aa).

The protein belongs to the universal ribosomal protein uS7 family. In terms of assembly, part of the 30S ribosomal subunit.

It is found in the plastid. Its subcellular location is the chloroplast. In terms of biological role, one of the primary rRNA binding proteins, it binds directly to 16S rRNA where it nucleates assembly of the head domain of the 30S subunit. The chain is Small ribosomal subunit protein uS7c from Beta vulgaris (Sugar beet).